The following is an 876-amino-acid chain: GRB2-associated and regulator of MAPK protein 1 (876 aa).

The tract at residues 12 to 320 (KDVKWSSVAV…HLVKGESWPE (309 aa)) is CABIT. 2 positions are modified to phosphotyrosine: Y105 and Y453. Residues 496-572 (IPGTLGAAVK…SPSPTLSYYS (77 aa)) form a disordered region. Positions 498–550 (GTLGAAVKSSDTALPPPPVPPKSEAVREECRLLNAPPVPPRSAKPLSTSPSIP) are necessary for interaction with GRB2. Over residues 558-572 (RQQTRSPSPTLSYYS) the composition is skewed to polar residues. Residues S610 and S614 each carry the phosphoserine modification. Disordered regions lie at residues 626 to 664 (WPNHYSGASESQTRSDFLLDPSRSYSYPRQKTPGTPKRN) and 738 to 763 (ASETSPLPLKIDGAEEDPKSGSPDLS). Polar residues-rich tracts occupy residues 631–640 (SGASESQTRS) and 648–658 (RSYSYPRQKTP). The SAM domain maps to 811 to 876 (LSIEEVSKSL…QFINGWRPKI (66 aa)).

This sequence belongs to the GAREM family. As to quaternary structure, isoform 1 interacts with EGFR. Isoform 1 interacts (via proline-rich domain and phosphorylated at Tyr-105 and Tyr-453) with GRB2 (via SH3 domains); the interaction occurs upon EGF stimulation. Isoform 1 interacts (phosphorylated at Tyr-453) with PTPN11; the interaction increases MAPK/ERK activity and does not affect the GRB2/SOS complex formation. Isoform 2 does not interact with GRB2. Post-translationally, on EGF stimulation, phosphorylated on Tyr-105 and Tyr-453. Isoform 1 is ubiquitously expressed.

Functionally, acts as an adapter protein that plays a role in intracellular signaling cascades triggered either by the cell surface activated epidermal growth factor receptor and/or cytoplasmic protein tyrosine kinases. Promotes activation of the MAPK/ERK signaling pathway. Plays a role in the regulation of cell proliferation. The protein is GRB2-associated and regulator of MAPK protein 1 (GAREM1) of Homo sapiens (Human).